We begin with the raw amino-acid sequence, 265 residues long: Cyclin-C (265 aa).

The 104-residue stretch at 48-151 (IQVLGEQLKL…LLENLDCCLI (104 aa)) folds into the Cyclin N-terminal domain.

Belongs to the cyclin family. Cyclin C subfamily. Component of the Cdk8 module of the Mediator complex.

The protein localises to the nucleus. In terms of biological role, component of the Mediator complex, a coactivator involved in regulated gene transcription of nearly all RNA polymerase II-dependent genes. Mediator functions as a bridge to convey information from gene-specific regulatory proteins to the basal RNA polymerase II transcription machinery. Mediator is recruited to promoters by direct interactions with regulatory proteins and serves as a scaffold for the assembly of a functional preinitiation complex with RNA polymerase II and the general transcription factors. Binds to and activates cyclin-dependent kinase Cdk8 that phosphorylates the CTD (C-terminal domain) of the large subunit of RNA polymerase II (RNAp II), which may inhibit the formation of a transcription initiation complex. The sequence is that of Cyclin-C (CycC) from Aedes aegypti (Yellowfever mosquito).